Reading from the N-terminus, the 72-residue chain is Sec-independent protein translocase protein TatA (72 aa).

The chain crosses the membrane as a helical span at residues 1–21 (MPFGLGLPEILVIGVIALLIF). The disordered stretch occupies residues 41–72 (KSGVSDEPAPQQSASKETAPNPPQSLPSGKDS).

It belongs to the TatA/E family. As to quaternary structure, forms a complex with TatC.

The protein resides in the cell inner membrane. Its function is as follows. Part of the twin-arginine translocation (Tat) system that transports large folded proteins containing a characteristic twin-arginine motif in their signal peptide across membranes. TatA could form the protein-conducting channel of the Tat system. The protein is Sec-independent protein translocase protein TatA of Gloeobacter violaceus (strain ATCC 29082 / PCC 7421).